The sequence spans 285 residues: CBY1-interacting BAR domain-containing protein 1-B (285 aa).

Residues 1-48 (MSQTPEARTRDNQTRQIQESVNNVEKHFGELCQIFAGYVRKTARLRDK) constitute a mitochondrion transit peptide. The BAR-like stretch occupies residues 11–221 (DNQTRQIQES…DIDEEEDLEV (211 aa)). A coiled-coil region spans residues 142–184 (RQIISQAETELQRATMDAARISQQLEETIDNFEKQKIKDIKKL). The segment covering 241 to 261 (NSRSGSTSRAPSVISQPPGNR) has biased composition (polar residues). Residues 241-285 (NSRSGSTSRAPSVISQPPGNRQKNRMEDDEDGEDDNDENSTEDEN) form a disordered region. Over residues 267 to 285 (EDDEDGEDDNDENSTEDEN) the composition is skewed to acidic residues.

The protein belongs to the CIBAR family.

The protein resides in the cytoplasm. It is found in the cytoskeleton. It localises to the microtubule organizing center. Its subcellular location is the centrosome. The protein localises to the centriole. The protein resides in the cell projection. It is found in the cilium. It localises to the nucleus. Its subcellular location is the mitochondrion inner membrane. The protein localises to the flagellum. Its function is as follows. Plays a critical role in regulating mitochondrial ultrastructure and function by maintaining the integrity of mitochondrial morphology, particularly the organization of cristae. Plays a crucial role in ciliogenesis. Plays a key role in the correct positioning of the annulus, a septin-based ring structure in the sperm flagellum, serving both as a physical barrier and a membrane diffusion barrier that separates the midpiece (MP) from the principal piece (PP). This Xenopus laevis (African clawed frog) protein is CBY1-interacting BAR domain-containing protein 1-B.